The sequence spans 308 residues: UDP-N-acetylenolpyruvoylglucosamine reductase (308 aa).

Residues 37-201 (RVGGPAQVLF…TQATFRGTPG (165 aa)) form the FAD-binding PCMH-type domain. The active site involves R181. Positions 216-233 (SREATQPIKSRTGGSTFK) are enriched in polar residues. The disordered stretch occupies residues 216–236 (SREATQPIKSRTGGSTFKNPP). S230 acts as the Proton donor in catalysis. The active site involves E300.

Belongs to the MurB family. It depends on FAD as a cofactor.

The protein localises to the cytoplasm. The catalysed reaction is UDP-N-acetyl-alpha-D-muramate + NADP(+) = UDP-N-acetyl-3-O-(1-carboxyvinyl)-alpha-D-glucosamine + NADPH + H(+). Its pathway is cell wall biogenesis; peptidoglycan biosynthesis. Functionally, cell wall formation. This chain is UDP-N-acetylenolpyruvoylglucosamine reductase, found in Azorhizobium caulinodans (strain ATCC 43989 / DSM 5975 / JCM 20966 / LMG 6465 / NBRC 14845 / NCIMB 13405 / ORS 571).